The primary structure comprises 290 residues: Fructose-1,6-bisphosphatase class 1 (290 aa).

The Mg(2+) site is built by E78, D96, L98, and D99. Substrate contacts are provided by residues 99-102, Y201, and K226; that span reads DGSS. E232 contacts Mg(2+).

The protein belongs to the FBPase class 1 family. As to quaternary structure, homotetramer. Mg(2+) is required as a cofactor.

It is found in the cytoplasm. It carries out the reaction beta-D-fructose 1,6-bisphosphate + H2O = beta-D-fructose 6-phosphate + phosphate. It functions in the pathway carbohydrate biosynthesis; gluconeogenesis. This chain is Fructose-1,6-bisphosphatase class 1, found in Helicobacter acinonychis (strain Sheeba).